A 797-amino-acid polypeptide reads, in one-letter code: Leucine-rich repeat-containing protein AAC1 (797 aa).

The segment covering 1–12 (MKRTSNRNEEAT) has biased composition (basic and acidic residues). Disordered regions lie at residues 1 to 20 (MKRTSNRNEEATAKLSSSTT), 51 to 103 (YSLF…TTTT), 125 to 148 (NLPTTETETTTITPTLTTTTTTTT), and 307 to 333 (HSTSVPSSPPPPPPPPPPQIQQPTITA). Over residues 55-81 (NEPNNDNDTNSSTRPNKQQKLLKSNES) the composition is skewed to polar residues. Low complexity predominate over residues 82–103 (TTSTTTTTTPITTTTTTTTTTT). The segment covering 313–326 (SSPPPPPPPPPPQI) has biased composition (pro residues). LRR repeat units lie at residues 376–397 (KLKKINLKNIGLDSRDKFDFFS), 406–425 (TLETLIICDNIGDEGMQLLS), 435–456 (VLKRLELQKNQFTNQSAYYLNK), 464–484 (QLETLNLSSNRIDEQGLIMMK), 492–513 (SLKEFIFSKNRLGNTDSVDFGK), 514–535 (SITSLDLHDSMVGSKQSIKGLS), 543–564 (SITSLNLSFNHIGSNEAIKSLS), 572–593 (TLKFVDLSFNKINSNFGLDHLV), 601–622 (SIHSISLQSNQIDNTSAITLSQ), and 633–653 (PFKYLNLSGNKIGIGGLKKLI).

The sequence is that of Leucine-rich repeat-containing protein AAC1 (AAC1) from Dictyostelium discoideum (Social amoeba).